Reading from the N-terminus, the 688-residue chain is Glycine--tRNA ligase beta subunit (688 aa).

Belongs to the class-II aminoacyl-tRNA synthetase family. In terms of assembly, tetramer of two alpha and two beta subunits.

The protein resides in the cytoplasm. It catalyses the reaction tRNA(Gly) + glycine + ATP = glycyl-tRNA(Gly) + AMP + diphosphate. The protein is Glycine--tRNA ligase beta subunit of Aliivibrio fischeri (strain MJ11) (Vibrio fischeri).